A 264-amino-acid chain; its full sequence is Elongation factor Ts (264 aa).

The involved in Mg(2+) ion dislocation from EF-Tu stretch occupies residues 76-79 (TDFV).

The protein belongs to the EF-Ts family.

The protein resides in the cytoplasm. Its function is as follows. Associates with the EF-Tu.GDP complex and induces the exchange of GDP to GTP. It remains bound to the aminoacyl-tRNA.EF-Tu.GTP complex up to the GTP hydrolysis stage on the ribosome. This chain is Elongation factor Ts, found in Deinococcus deserti (strain DSM 17065 / CIP 109153 / LMG 22923 / VCD115).